Reading from the N-terminus, the 211-residue chain is MTLTIALTKGRTETQVLPLLAAAGIHCEAIQAKSRRLIFADDPSFHFILVKAPEVLTYLNHGTVDIGIVGSDILAEQGHRQFDMLDLNTGRCRFILASTADFDPKQTKRKLIATKYPHIAQQYFQKQGEDVEIIKIEGSVELAPLTGMADAIVDITETGTTLRENHLKVFAELASVSTHLVVNRLALKQKRTEIYQLIQSLQKVRPQEASL.

This sequence belongs to the ATP phosphoribosyltransferase family. Short subfamily. Heteromultimer composed of HisG and HisZ subunits.

It is found in the cytoplasm. It carries out the reaction 1-(5-phospho-beta-D-ribosyl)-ATP + diphosphate = 5-phospho-alpha-D-ribose 1-diphosphate + ATP. The protein operates within amino-acid biosynthesis; L-histidine biosynthesis; L-histidine from 5-phospho-alpha-D-ribose 1-diphosphate: step 1/9. Functionally, catalyzes the condensation of ATP and 5-phosphoribose 1-diphosphate to form N'-(5'-phosphoribosyl)-ATP (PR-ATP). Has a crucial role in the pathway because the rate of histidine biosynthesis seems to be controlled primarily by regulation of HisG enzymatic activity. In Lacticaseibacillus paracasei (strain ATCC 334 / BCRC 17002 / CCUG 31169 / CIP 107868 / KCTC 3260 / NRRL B-441) (Lactobacillus paracasei), this protein is ATP phosphoribosyltransferase.